Reading from the N-terminus, the 284-residue chain is Gap junction beta-1 protein (284 aa).

The Cytoplasmic segment spans residues 1–22; that stretch reads MNWTGLYTLLSGVNRHSTAIGR. Residues 23-45 form a helical membrane-spanning segment; that stretch reads VWLSVIFIFRIMVLVVAAESVWG. Residues 46-75 lie on the Extracellular side of the membrane; that stretch reads DEKSSFICNTLQPGCNSVCYDHFFPISHVR. The chain crosses the membrane as a helical span at residues 76 to 95; it reads LWSLQLILVSTPALLVAMHV. The Cytoplasmic portion of the chain corresponds to 96-130; it reads AHQQHIEKKMLRLEGHGDPLHLEEVKRHKVHISGT. The chain crosses the membrane as a helical span at residues 131–153; it reads LWWTYVISVVFRLLFEAAFMYVF. The Extracellular portion of the chain corresponds to 154-191; the sequence is YLLYPGYAMVRLVKCDAYPCPNTVDCFVSRPTEKTIFT. A helical transmembrane segment spans residues 192–214; it reads VFMLAASGICIILNVAEVVYLIF. Over 215–284 the chain is Cytoplasmic; sequence RACARRAQRR…AEKSDRCSAC (70 aa). Residues Ser233, Ser259, Ser267, and Ser278 each carry the phosphoserine modification.

It belongs to the connexin family. Beta-type (group I) subfamily. In terms of assembly, a connexon is composed of a hexamer of connexins. Interacts with CNST.

It is found in the cell membrane. The protein resides in the cell junction. Its subcellular location is the gap junction. One gap junction consists of a cluster of closely packed pairs of transmembrane channels, the connexons, through which materials of low MW diffuse from one cell to a neighboring cell. The protein is Gap junction beta-1 protein (GJB1) of Bos taurus (Bovine).